Here is a 322-residue protein sequence, read N- to C-terminus: Acetyl-coenzyme A carboxylase carboxyl transferase subunit beta (322 aa).

The region spanning 24–293 is the CoA carboxyltransferase N-terminal domain; that stretch reads LWIKCPDTGQ…PAVEEIAASD (270 aa).

The protein belongs to the AccD/PCCB family. In terms of assembly, acetyl-CoA carboxylase is a heterohexamer composed of biotin carboxyl carrier protein (AccB), biotin carboxylase (AccC) and two subunits each of ACCase subunit alpha (AccA) and ACCase subunit beta (AccD).

The protein resides in the cytoplasm. It catalyses the reaction N(6)-carboxybiotinyl-L-lysyl-[protein] + acetyl-CoA = N(6)-biotinyl-L-lysyl-[protein] + malonyl-CoA. The protein operates within lipid metabolism; malonyl-CoA biosynthesis; malonyl-CoA from acetyl-CoA: step 1/1. Its function is as follows. Component of the acetyl coenzyme A carboxylase (ACC) complex. Biotin carboxylase (BC) catalyzes the carboxylation of biotin on its carrier protein (BCCP) and then the CO(2) group is transferred by the transcarboxylase to acetyl-CoA to form malonyl-CoA. This is Acetyl-coenzyme A carboxylase carboxyl transferase subunit beta from Rhodopseudomonas palustris (strain BisB5).